The following is a 230-amino-acid chain: Cytidylate kinase (230 aa).

Position 12 to 20 (12 to 20) interacts with ATP; sequence GPSGAGKGT.

This sequence belongs to the cytidylate kinase family. Type 1 subfamily.

It is found in the cytoplasm. It carries out the reaction CMP + ATP = CDP + ADP. The catalysed reaction is dCMP + ATP = dCDP + ADP. The sequence is that of Cytidylate kinase from Shewanella halifaxensis (strain HAW-EB4).